A 565-amino-acid polypeptide reads, in one-letter code: FAD-linked oxidoreductase ZEB1 (565 aa).

The signal sequence occupies residues 1 to 27 (MKLSPSKYLPVLLGTLSLTIANPSADC). N-linked (GlcNAc...) asparagine glycosylation is found at asparagine 46, asparagine 82, and asparagine 100. In terms of domain architecture, FAD-binding PCMH-type spans 115–293 (LGNYVSYAIA…ISMTVKAHPG (179 aa)). N-linked (GlcNAc...) asparagine glycans are attached at residues asparagine 340, asparagine 352, and asparagine 421.

It belongs to the oxygen-dependent FAD-linked oxidoreductase family.

It participates in mycotoxin biosynthesis. In terms of biological role, FAD-linked oxidoreductase; part of the gene cluster that mediates the biosynthesis of zearalenone (ZEA), a nonsteroid estrogen that is a contaminant of cereal grains and causes estrogenic disorders in humans and animals. The ZEA backbone is synthesized from a single acetyl-CoA molecule and eight malonyl-CoA molecules. The reducing polyketide synthase ZEA2 is proposed to synthesize a reduced hexaketide intermediate by using different combinations of its reductive domains during each round of condensation. The hexaketide thioester is then transacylated to the non-reducing polyketide synthase ZEA1 and is further condensed with three malonyl-CoAs without reductive tailoring to yield a mixed reduced/unreduced nonaketide. ZEA1 must be able to interact with ZEA2 to facilitate starter-unit acyltransfer and initiate polyketide biosynthesis. ZEA1 also mediates the required C2-C7 cyclization to form the resorcylate core and catalyzes the formation of the macrolactone. ZEB1 is then responsible for the chemical conversion of beta-zearalenonol (beta-ZOL) to ZEA in the biosynthetic pathway. This is FAD-linked oxidoreductase ZEB1 from Gibberella zeae (strain ATCC MYA-4620 / CBS 123657 / FGSC 9075 / NRRL 31084 / PH-1) (Wheat head blight fungus).